A 399-amino-acid chain; its full sequence is uncharacterized protein (399 aa).

The next 11 helical transmembrane spans lie at 19–39, 46–66, 91–111, 123–143, 146–166, 183–203, 225–247, 283–303, 307–327, 335–355, and 369–389; these read IFSI…PLFV, VNLL…LLMY, FYTI…PILG, QFEQ…IIAS, IYAK…IFIA, LLSA…ISYI, VAIL…MPIW, VLLL…LLGF, FGLD…FAYL, LFSI…YLGY, and IEYT…VYLL.

The protein localises to the host membrane. Its function is as follows. Putative amino acid transporter. This is an uncharacterized protein from Saccharolobus islandicus (Sulfolobus islandicus).